A 122-amino-acid polypeptide reads, in one-letter code: Large ribosomal subunit protein uL14 (122 aa).

The protein belongs to the universal ribosomal protein uL14 family. Part of the 50S ribosomal subunit. Forms a cluster with proteins L3 and L19. In the 70S ribosome, L14 and L19 interact and together make contacts with the 16S rRNA in bridges B5 and B8.

Its function is as follows. Binds to 23S rRNA. Forms part of two intersubunit bridges in the 70S ribosome. This is Large ribosomal subunit protein uL14 from Bordetella avium (strain 197N).